The chain runs to 1375 residues: DNA-directed RNA polymerase subunit beta (1375 aa).

Belongs to the RNA polymerase beta chain family. In terms of assembly, the RNAP catalytic core consists of 2 alpha, 1 beta, 1 beta' and 1 omega subunit. When a sigma factor is associated with the core the holoenzyme is formed, which can initiate transcription.

It catalyses the reaction RNA(n) + a ribonucleoside 5'-triphosphate = RNA(n+1) + diphosphate. Functionally, DNA-dependent RNA polymerase catalyzes the transcription of DNA into RNA using the four ribonucleoside triphosphates as substrates. This Coxiella burnetii (strain RSA 331 / Henzerling II) protein is DNA-directed RNA polymerase subunit beta.